A 143-amino-acid polypeptide reads, in one-letter code: Na(+)/H(+) antiporter subunit B (143 aa).

Transmembrane regions (helical) follow at residues 9–31, 36–58, 71–93, and 117–139; these read LILQ…YLFL, APGG…LLAY, FIYV…FVFG, and ATIF…IQTI.

The protein belongs to the CPA3 antiporters (TC 2.A.63) subunit B family. Forms a heterooligomeric complex that consists of seven subunits: MrpA, MrpB, MrpC, MrpD, MrpE, MrpF and MrpG.

It is found in the cell membrane. In terms of biological role, mrp complex is a Na(+)/H(+) antiporter that is considered to be the major Na(+) excretion system in B.subtilis. Has a major role in Na(+) resistance and a minor role in Na(+)- and K(+)-dependent pH homeostasis as compared to TetB. MrpA may be the actual Na(+)/H(+) antiporter, although the six other Mrp proteins are all required for Na(+)/H(+) antiport activity and Na(+) resistance. MrpA is required for initiation of sporulation when external Na(+) concentration increases. Also transports Li(+) but not K(+), Ca(2+) or Mg(2+). The polypeptide is Na(+)/H(+) antiporter subunit B (mrpB) (Bacillus subtilis (strain 168)).